A 314-amino-acid chain; its full sequence is Acetyl-coenzyme A carboxylase carboxyl transferase subunit beta (314 aa).

In terms of domain architecture, CoA carboxyltransferase N-terminal spans 44–311 (LMNKCPHCGT…VETWQASSPL (268 aa)). Residues Cys48, Cys51, Cys67, and Cys70 each coordinate Zn(2+). Residues 48–70 (CPHCGTIHYSKDLEKNLRVCKGC) form a C4-type zinc finger.

It belongs to the AccD/PCCB family. As to quaternary structure, acetyl-CoA carboxylase is a heterohexamer composed of biotin carboxyl carrier protein (AccB), biotin carboxylase (AccC) and two subunits each of ACCase subunit alpha (AccA) and ACCase subunit beta (AccD). The cofactor is Zn(2+).

It is found in the cytoplasm. The catalysed reaction is N(6)-carboxybiotinyl-L-lysyl-[protein] + acetyl-CoA = N(6)-biotinyl-L-lysyl-[protein] + malonyl-CoA. The protein operates within lipid metabolism; malonyl-CoA biosynthesis; malonyl-CoA from acetyl-CoA: step 1/1. Component of the acetyl coenzyme A carboxylase (ACC) complex. Biotin carboxylase (BC) catalyzes the carboxylation of biotin on its carrier protein (BCCP) and then the CO(2) group is transferred by the transcarboxylase to acetyl-CoA to form malonyl-CoA. The sequence is that of Acetyl-coenzyme A carboxylase carboxyl transferase subunit beta from Brevibacillus brevis (strain 47 / JCM 6285 / NBRC 100599).